A 1467-amino-acid polypeptide reads, in one-letter code: Helicase ARIP4 (1467 aa).

Disordered regions lie at residues 1 to 150 (MSDE…YAAP) and 186 to 234 (DSSS…GGTH). Positions 11 to 49 (PDLDPDVELEDAEEEEEEEEVAVEECDRDDEEDLLDDPS) are enriched in acidic residues. Positions 72-82 (TSTTSSQSEPS) are enriched in low complexity. A compositionally biased stretch (basic residues) spans 100–115 (KKRAQKPSHMRRNIRK). Residues lysine 115 and lysine 127 each participate in a glycyl lysine isopeptide (Lys-Gly) (interchain with G-Cter in SUMO2) cross-link. Basic and acidic residues-rich tracts occupy residues 133–147 (ELER…RKDY) and 192–201 (EDEKSSRDEV). A Glycyl lysine isopeptide (Lys-Gly) (interchain with G-Cter in SUMO2) cross-link involves residue lysine 272. The Helicase ATP-binding domain maps to 292–512 (RFKTSSGFGC…WCMVDFVRPD (221 aa)). Residue 305–312 (HSMGLGKT) participates in ATP binding. The short motif at 463 to 466 (DEGH) is the DEAH box element. An LXXLL motif 1 motif is present at residues 551–555 (LHSLL). A disordered region spans residues 649–673 (GSAGTSARCPPQGTKGKGEDSTLAS). Glycyl lysine isopeptide (Lys-Gly) (interchain with G-Cter in SUMO2) cross-links involve residues lysine 665, lysine 682, lysine 759, lysine 901, lysine 1014, and lysine 1018. In terms of domain architecture, Helicase C-terminal spans 728-896 (HLIEESVKLG…RVVDDLNPML (169 aa)). The interval 1120–1171 (RATGKPKVPEDGRMAASGSQGPSCESTSNGRHSASSPKAPDPEGLARPVSPD) is disordered. A compositionally biased stretch (polar residues) spans 1136-1155 (SGSQGPSCESTSNGRHSASS). Phosphoserine occurs at positions 1169 and 1172. 2 disordered regions span residues 1184 to 1221 (DVAA…TALG) and 1247 to 1284 (PVLD…VQPY). Threonine 1260 is subject to Phosphothreonine. The LXXLL motif 2 signature appears at 1329–1333 (LSNLL). The interval 1445–1467 (AEVGFSSNDDEDKDDDVIEVTGK) is disordered. Positions 1452 to 1467 (NDDEDKDDDVIEVTGK) are enriched in acidic residues.

This sequence belongs to the SNF2/RAD54 helicase family. Interacts with AR via its N-terminus. Interacts with DYRK1A. Binds DNA and mononucleosomes, but does not seem to form large multiprotein complexes. Post-translationally, sumoylated.

It localises to the nucleus. The enzyme catalyses ATP + H2O = ADP + phosphate + H(+). Enzyme activity is enhanced by dsDNA (double-stranded DNA) and ssDNA (single-stranded DNA). In terms of biological role, DNA helicase that modulates androgen receptor (AR)-dependent transactivation in a promoter-dependent manner. Not able to remodel mononucleosomes in vitro. The sequence is that of Helicase ARIP4 (RAD54L2) from Homo sapiens (Human).